A 1043-amino-acid polypeptide reads, in one-letter code: BAG family molecular chaperone regulator 6 (1043 aa).

Disordered regions lie at residues 253–294 (KEEL…GKTV), 311–331 (DVKEAQNQKNKEEPGQVPYPI), 343–366 (VEASESKESSNEGRNLESCPSDLH), 410–500 (NIPV…AESR), and 533–566 (SVESNSNLQEESNGEIIKPCEAKENREQPAKKSF). Basic and acidic residues-rich tracts occupy residues 311 to 324 (DVKEAQNQKNKEEP), 343 to 357 (VEASESKESSNEGRN), 416 to 443 (SENHLPKPTEPTKRIAKNEPVKSTKKEQ), and 478 to 487 (KRMEKSKETK). Residues 534–543 (VESNSNLQEE) show a composition bias toward polar residues. A compositionally biased stretch (basic and acidic residues) spans 550 to 566 (KPCEAKENREQPAKKSF). The IQ domain maps to 568-597 (EEEAARIIQSMYRGYDVRRWEPIKKLKEIA). Positions 595-672 (EIATVREQMG…SIQDKLDSLK (78 aa)) constitute a BAG domain. Basic and acidic residues predominate over residues 724-741 (SPEEHPMSVLNRTDEKQA). Disordered regions lie at residues 724 to 749 (SPEEHPMSVLNRTDEKQAESAAETEE), 764 to 799 (ATENAAAASSTTIPEKIGEVETVVPGNPPSADGNGM), 817 to 975 (EPIN…ISKE), and 1015 to 1043 (EKKLSHKKKTQIRRRASKPMSVSPTDAVL). The span at 840–852 (ASEVSEAETNSSE) shows a compositional bias: low complexity. A compositionally biased stretch (basic and acidic residues) spans 853–871 (NENRKGEDDIVLHSEKNVE). Composition is skewed to polar residues over residues 885–899 (QPLSQDPSSSYTREG) and 919–932 (SPNNSKGIGQQTSE). Residues 934–951 (QDEKEQSPETEVIVKEQP) are compositionally biased toward basic and acidic residues. Positions 971-1024 (GISKETKKLMEENQRFKETMETLVKAGREQLEVISKLTSRVKSLEKKLSHKKKT) form a coiled coil. The segment covering 1018 to 1031 (LSHKKKTQIRRRAS) has biased composition (basic residues). The segment covering 1034-1043 (MSVSPTDAVL) has biased composition (polar residues).

As to quaternary structure, binds to the ATPase domain of HSP70/HSC70 chaperones. Interacts with calmodulins CAM1, CAM2, CAM3, CAM4, CAM6 and CAM7. Interacts with BAGP1 and APCB1. As to expression, detected in stems, leaves, flowers and roots.

Co-chaperone that regulates diverse cellular pathways, such as programmed cell death and stress responses. Involved in plant basal resistance. Involved in basal heat response through the regulation of the heat induced small HSP (sHSP) transcriptional cascade. In terms of biological role, induces autophagy. This chain is BAG family molecular chaperone regulator 6, found in Arabidopsis thaliana (Mouse-ear cress).